The primary structure comprises 304 residues: E3 ubiquitin-protein ligase BOI (304 aa).

Positions 178 to 214 (LQERVKSLYVENQIWRDIAQTNEANANTLRTNLDQVL) are WRD domain. Residues 197-220 (QTNEANANTLRTNLDQVLAQLETF) adopt a coiled-coil conformation. The RING-type zinc-finger motif lies at 254–291 (CKRCGEREASVLVLPCRHLCLCTVCGGSALLRTCPVCD).

In terms of assembly, interacts with MYB108/BOS1 and the DELLA proteins GAI, RGA, RGL1, RGL2 and RGL3. In terms of tissue distribution, expressed in leaves, siliques, roots, flowering tissues and stigma tips.

The protein resides in the nucleus. It carries out the reaction S-ubiquitinyl-[E2 ubiquitin-conjugating enzyme]-L-cysteine + [acceptor protein]-L-lysine = [E2 ubiquitin-conjugating enzyme]-L-cysteine + N(6)-ubiquitinyl-[acceptor protein]-L-lysine.. The protein operates within protein degradation; proteasomal ubiquitin-dependent pathway. Its function is as follows. E3 ubiquitin-protein ligase involved in the regulation of pathogen and abiotic stress responses by facilitating degradation of MYB108/BOI. Attenuates cell death by preventing caspase activation. Has no effect on the stability of the DELLA proteins. Not regulated by MYB108/BOI. This Arabidopsis thaliana (Mouse-ear cress) protein is E3 ubiquitin-protein ligase BOI (BOI).